The primary structure comprises 345 residues: S-adenosylmethionine:tRNA ribosyltransferase-isomerase (345 aa).

The protein belongs to the QueA family. Monomer.

The protein localises to the cytoplasm. It catalyses the reaction 7-aminomethyl-7-carbaguanosine(34) in tRNA + S-adenosyl-L-methionine = epoxyqueuosine(34) in tRNA + adenine + L-methionine + 2 H(+). It participates in tRNA modification; tRNA-queuosine biosynthesis. Transfers and isomerizes the ribose moiety from AdoMet to the 7-aminomethyl group of 7-deazaguanine (preQ1-tRNA) to give epoxyqueuosine (oQ-tRNA). The sequence is that of S-adenosylmethionine:tRNA ribosyltransferase-isomerase from Shewanella putrefaciens (strain CN-32 / ATCC BAA-453).